Reading from the N-terminus, the 313-residue chain is Calcium homeostasis modulator protein 6 (313 aa).

The Cytoplasmic segment spans residues 1-21; it reads MEKFKAVLDLQRKHRNALGYS. A helical transmembrane segment spans residues 22-37; the sequence is LVTLLTAGGEKIFSSV. The Extracellular portion of the chain corresponds to 38–46; the sequence is VFQCPCTAT. 3 disulfide bridges follow: C41-C125, C43-C154, and C138-C145. The helical transmembrane segment at 47 to 68 threads the bilayer; it reads WNLPYGLVFLLVPALALFLLGY. Over 69–101 the chain is Cytoplasmic; it reads ALSARTWRLLTGCCSRSARFSSGLRSAFVCAQL. Residues 102-126 form a helical membrane-spanning segment; the sequence is SMTAAFAPLTWVAVALLEGSFYQCA. The Extracellular portion of the chain corresponds to 127-167; sequence VSGSARLAPYLCKGRDPNCNATLPQAPCNKQKVEMQEILSQ. Residues 168 to 190 traverse the membrane as a helical segment; the sequence is LKAQSQVFGWILIAAVIILLLLV. The Cytoplasmic segment spans residues 191 to 313; the sequence is KSVTRCFSPV…DMSMTNTHEL (123 aa).

Belongs to the CALHM family. Oligomerizes to form decameric and undecameric channels. Post-translationally, N-glycosylated. In terms of tissue distribution, immune cells in primary and secondary lymphoid organs.

It is found in the cell membrane. It carries out the reaction ATP(in) = ATP(out). With respect to regulation, inhibited by Gd(3+). Partially inhibited by divalent ions Ca(2+) and Ba(2+). Its function is as follows. Pore-forming subunit of an ATP-permeable channel. In response to pathogen-derived and proinflammatory stimuli, relocates from intracellular compartments to NK-dendritic cell and NK-macrophage immune synapses where it mediates ATP efflux and NK cell activation involved in antimicrobial and antitumor responses. May assemble to form gap junction channel-like structures with gating and ion conductance likely regulated by membrane lipids and voltage rather than by extracellular calcium levels. This is Calcium homeostasis modulator protein 6 from Mus musculus (Mouse).